We begin with the raw amino-acid sequence, 109 residues long: uncharacterized protein (109 aa).

Positions 1–22 (MKRFPLFLLFTLLTLSTVPAQA) are cleaved as a signal peptide. Residues 39 to 109 (AYNPDRGRDY…ERRMEDEYGR (71 aa)) are disordered. Residues 41-109 (NPDRGRDYED…ERRMEDEYGR (69 aa)) are compositionally biased toward basic and acidic residues.

This is an uncharacterized protein from Escherichia coli O6:H1 (strain CFT073 / ATCC 700928 / UPEC).